The sequence spans 192 residues: MRVVFLGPPGSGKGTQARMLTEEYRIPQLSTGDMLREVISRETEVGRKAKAIINAGALVSDSIVNQIVSNRINESDCINGFVLDGYPRTVGQAEVLQQILQSKNMQLDAVIELIVDENALIERMKKRVQETIAVGGQVRSDDNHVAFAKRLVEYREKTAPLSKFYSERGLLKVVDGMMAVTEVSRVIRGFFK.

10–15 is an ATP binding site; the sequence is GSGKGT. Residues 30–59 are NMP; it reads STGDMLREVISRETEVGRKAKAIINAGALV. AMP is bound by residues threonine 31, arginine 36, 57–59, 85–88, and glutamine 92; these read ALV and GYPR. The segment at 126–142 is LID; the sequence is KRVQETIAVGGQVRSDD. Arginine 127 provides a ligand contact to ATP. The AMP site is built by arginine 139 and arginine 150. Methionine 178 serves as a coordination point for ATP.

Belongs to the adenylate kinase family. Monomer.

The protein localises to the cytoplasm. It catalyses the reaction AMP + ATP = 2 ADP. It participates in purine metabolism; AMP biosynthesis via salvage pathway; AMP from ADP: step 1/1. Its function is as follows. Catalyzes the reversible transfer of the terminal phosphate group between ATP and AMP. Plays an important role in cellular energy homeostasis and in adenine nucleotide metabolism. This chain is Adenylate kinase, found in Bartonella quintana (strain Toulouse) (Rochalimaea quintana).